Reading from the N-terminus, the 884-residue chain is Formin-like protein 9 (884 aa).

Residues 1–19 (MGMAMRCVLVLFSVSPVLL) form the signal peptide. Residues 140 to 160 (IVALGVVGLCLVVLGVVIAAF) traverse the membrane as a helical segment. Disordered stretches follow at residues 179–204 (FHHGSRDQRSPAATRKVSSHPSPDPL), 295–318 (THDSPSDSSYQSLSPDCTSRLSPK), and 403–473 (TMTN…PLPR). Low complexity predominate over residues 300–310 (SDSSYQSLSPD). The segment covering 429-443 (KPAPPPPPQKNPPPN) has biased composition (pro residues). In terms of domain architecture, FH2 spans 464–884 (VGKDGSPLPR…QTLNLVLPLK (421 aa)).

Belongs to the formin-like family. Class-I subfamily.

The protein resides in the membrane. The protein is Formin-like protein 9 (FH9) of Oryza sativa subsp. indica (Rice).